The sequence spans 511 residues: ATP synthase subunit alpha (511 aa).

169–176 (GDRQTGKT) serves as a coordination point for ATP.

The protein belongs to the ATPase alpha/beta chains family. F-type ATPases have 2 components, CF(1) - the catalytic core - and CF(0) - the membrane proton channel. CF(1) has five subunits: alpha(3), beta(3), gamma(1), delta(1), epsilon(1). CF(0) has three main subunits: a(1), b(2) and c(9-12). The alpha and beta chains form an alternating ring which encloses part of the gamma chain. CF(1) is attached to CF(0) by a central stalk formed by the gamma and epsilon chains, while a peripheral stalk is formed by the delta and b chains.

Its subcellular location is the cell inner membrane. It catalyses the reaction ATP + H2O + 4 H(+)(in) = ADP + phosphate + 5 H(+)(out). Functionally, produces ATP from ADP in the presence of a proton gradient across the membrane. The alpha chain is a regulatory subunit. The chain is ATP synthase subunit alpha from Bartonella henselae (strain ATCC 49882 / DSM 28221 / CCUG 30454 / Houston 1) (Rochalimaea henselae).